Consider the following 476-residue polypeptide: Cysteine--tRNA ligase (476 aa).

Cys-30 lines the Zn(2+) pocket. The 'HIGH' region motif lies at 32-42; it reads PTVYNYIHIGN. Residues Cys-215, His-240, and Glu-244 each coordinate Zn(2+). The 'KMSKS' region signature appears at 274–278; that stretch reads KMSKS. An ATP-binding site is contributed by Lys-277.

This sequence belongs to the class-I aminoacyl-tRNA synthetase family. Monomer. It depends on Zn(2+) as a cofactor.

The protein localises to the cytoplasm. The catalysed reaction is tRNA(Cys) + L-cysteine + ATP = L-cysteinyl-tRNA(Cys) + AMP + diphosphate. In Lactobacillus helveticus (strain DPC 4571), this protein is Cysteine--tRNA ligase.